The sequence spans 186 residues: Elongation factor P (186 aa).

This sequence belongs to the elongation factor P family.

It localises to the cytoplasm. Its pathway is protein biosynthesis; polypeptide chain elongation. Functionally, involved in peptide bond synthesis. Stimulates efficient translation and peptide-bond synthesis on native or reconstituted 70S ribosomes in vitro. Probably functions indirectly by altering the affinity of the ribosome for aminoacyl-tRNA, thus increasing their reactivity as acceptors for peptidyl transferase. This Streptococcus sanguinis (strain SK36) protein is Elongation factor P.